Reading from the N-terminus, the 530-residue chain is GMP synthase [glutamine-hydrolyzing] (530 aa).

In terms of domain architecture, Glutamine amidotransferase type-1 spans 4-205 (RILILDYGSQ…VREICGCEGD (202 aa)). Residue cysteine 84 is the Nucleophile of the active site. Residues histidine 179 and glutamate 181 contribute to the active site. In terms of domain architecture, GMPS ATP-PPase spans 206-398 (WNMPDYISEA…LGLPPQMVYR (193 aa)). Position 233 to 239 (233 to 239 (SGGVDSS)) interacts with ATP.

Homodimer.

It carries out the reaction XMP + L-glutamine + ATP + H2O = GMP + L-glutamate + AMP + diphosphate + 2 H(+). Its pathway is purine metabolism; GMP biosynthesis; GMP from XMP (L-Gln route): step 1/1. Catalyzes the synthesis of GMP from XMP. This chain is GMP synthase [glutamine-hydrolyzing], found in Bordetella avium (strain 197N).